The primary structure comprises 582 residues: Inactive metallocarboxypeptidase ECM14 (582 aa).

The N-terminal stretch at 1–20 (MHILQVITGATLVSVPFVSA) is a signal peptide. The propeptide occupies 21 to 172 (IPSSTSEFLP…QAVYESYPQP (152 aa)). Residues 200–522 (DYQPLSVIIP…NAVLVFGQFL (323 aa)) enclose the Peptidase M14 domain. Residues His-265 and Glu-268 each contribute to the Zn(2+) site. Substrate-binding positions include 265 to 268 (HARE), Arg-323, and 340 to 341 (DR). Cys-334 and Cys-357 form a disulfide bridge. 2 N-linked (GlcNAc...) asparagine glycosylation sites follow: Asn-381 and Asn-387. His-397 provides a ligand contact to Zn(2+). Residue 398 to 399 (SY) participates in substrate binding. Residues 561–571 (SNQLEDDDNEN) are compositionally biased toward acidic residues. The tract at residues 561-582 (SNQLEDDDNENDTLLGFRTQKV) is disordered. Asn-571 carries N-linked (GlcNAc...) asparagine glycosylation.

The protein belongs to the peptidase M14 family. The cofactor is Zn(2+).

It localises to the vacuole. The protein resides in the secreted. Inactive carboxypeptidase that may play a role in cell wall organization and biogenesis. The polypeptide is Inactive metallocarboxypeptidase ECM14 (ECM14) (Coccidioides posadasii (strain RMSCC 757 / Silveira) (Valley fever fungus)).